Consider the following 287-residue polypeptide: Urease accessory protein UreD (287 aa).

This sequence belongs to the UreD family. In terms of assembly, ureD, UreF and UreG form a complex that acts as a GTP-hydrolysis-dependent molecular chaperone, activating the urease apoprotein by helping to assemble the nickel containing metallocenter of UreC. The UreE protein probably delivers the nickel.

The protein resides in the cytoplasm. Functionally, required for maturation of urease via the functional incorporation of the urease nickel metallocenter. The sequence is that of Urease accessory protein UreD from Aliivibrio fischeri (strain MJ11) (Vibrio fischeri).